A 54-amino-acid chain; its full sequence is Insulin (54 aa).

Disulfide bonds link cysteine 7-cysteine 39, cysteine 19-cysteine 52, and cysteine 38-cysteine 43.

The protein belongs to the insulin family. In terms of assembly, heterodimer of a B chain and an A chain linked by two disulfide bonds.

It localises to the secreted. Its function is as follows. Insulin decreases blood glucose concentration. It increases cell permeability to monosaccharides, amino acids and fatty acids. It accelerates glycolysis, the pentose phosphate cycle, and glycogen synthesis in liver. In Squalus acanthias (Spiny dogfish), this protein is Insulin (ins).